The sequence spans 336 residues: Tryptophan--tRNA ligase 1 (336 aa).

Residues 9-11 (KPT) and 17-18 (GN) contribute to the ATP site. Residues 10 to 18 (PTGHLTLGN) carry the 'HIGH' region motif. Aspartate 137 serves as a coordination point for L-tryptophan. ATP-binding positions include 149 to 151 (GED), valine 188, and 197 to 201 (KMGKS). Positions 197-201 (KMGKS) match the 'KMSKS' region motif.

This sequence belongs to the class-I aminoacyl-tRNA synthetase family. Homodimer.

Its subcellular location is the cytoplasm. It catalyses the reaction tRNA(Trp) + L-tryptophan + ATP = L-tryptophyl-tRNA(Trp) + AMP + diphosphate + H(+). Functionally, catalyzes the attachment of tryptophan to tRNA(Trp). This chain is Tryptophan--tRNA ligase 1, found in Streptomyces coelicolor (strain ATCC BAA-471 / A3(2) / M145).